Here is a 475-residue protein sequence, read N- to C-terminus: Protein translocase subunit SecD (475 aa).

6 helical membrane passes run 7–27 (LLIT…SLKF), 313–333 (KGFM…FIYY), 338–358 (LIAD…MAYL), 364–384 (LPGV…NVLI), 410–430 (FWTI…LFQF), and 437–457 (GFAV…VTVT).

This sequence belongs to the SecD/SecF family. SecD subfamily. In terms of assembly, forms a complex with SecF. Part of the essential Sec protein translocation apparatus which comprises SecA, SecYEG and auxiliary proteins SecDF. Other proteins may also be involved.

It localises to the cell inner membrane. Its function is as follows. Part of the Sec protein translocase complex. Interacts with the SecYEG preprotein conducting channel. SecDF uses the proton motive force (PMF) to complete protein translocation after the ATP-dependent function of SecA. In Endomicrobium trichonymphae, this protein is Protein translocase subunit SecD.